Reading from the N-terminus, the 441-residue chain is Arginine biosynthesis bifunctional protein ArgJ, mitochondrial (441 aa).

Residues Thr-177, Lys-204, Thr-215, Glu-301, Asn-436, and Ser-441 each coordinate substrate. The active-site Nucleophile is the Thr-215.

Belongs to the ArgJ family. Heterodimer of an alpha and a beta chain. In terms of processing, the alpha and beta chains are autoproteolytically processed from a single precursor protein within the mitochondrion.

It localises to the mitochondrion matrix. The catalysed reaction is N(2)-acetyl-L-ornithine + L-glutamate = N-acetyl-L-glutamate + L-ornithine. It carries out the reaction L-glutamate + acetyl-CoA = N-acetyl-L-glutamate + CoA + H(+). The protein operates within amino-acid biosynthesis; L-arginine biosynthesis; L-ornithine and N-acetyl-L-glutamate from L-glutamate and N(2)-acetyl-L-ornithine (cyclic): step 1/1. Its pathway is amino-acid biosynthesis; L-arginine biosynthesis; N(2)-acetyl-L-ornithine from L-glutamate: step 1/4. Its function is as follows. Catalyzes two activities which are involved in the cyclic version of arginine biosynthesis: the synthesis of acetylglutamate from glutamate and acetyl-CoA, and of ornithine by transacetylation between acetylornithine and glutamate. The chain is Arginine biosynthesis bifunctional protein ArgJ, mitochondrial from Candida glabrata (strain ATCC 2001 / BCRC 20586 / JCM 3761 / NBRC 0622 / NRRL Y-65 / CBS 138) (Yeast).